The primary structure comprises 344 residues: Holliday junction branch migration complex subunit RuvB (344 aa).

The segment at 1 to 185 (MTERSDRDVS…FGFTAHMDFY (185 aa)) is large ATPase domain (RuvB-L). ATP contacts are provided by residues L24, R25, G66, K69, T70, S71, 132-134 (EDF), R175, Y185, and R222. Mg(2+) is bound at residue T70. The tract at residues 186-256 (EPAELERVLA…VAKAALEVYD (71 aa)) is small ATPAse domain (RuvB-S). A head domain (RuvB-H) region spans residues 259-344 (ELGLDRLDRA…VGASQPGLFE (86 aa)). DNA-binding residues include R314 and R319.

This sequence belongs to the RuvB family. In terms of assembly, homohexamer. Forms an RuvA(8)-RuvB(12)-Holliday junction (HJ) complex. HJ DNA is sandwiched between 2 RuvA tetramers; dsDNA enters through RuvA and exits via RuvB. An RuvB hexamer assembles on each DNA strand where it exits the tetramer. Each RuvB hexamer is contacted by two RuvA subunits (via domain III) on 2 adjacent RuvB subunits; this complex drives branch migration. In the full resolvosome a probable DNA-RuvA(4)-RuvB(12)-RuvC(2) complex forms which resolves the HJ.

The protein resides in the cytoplasm. It carries out the reaction ATP + H2O = ADP + phosphate + H(+). Its function is as follows. The RuvA-RuvB-RuvC complex processes Holliday junction (HJ) DNA during genetic recombination and DNA repair, while the RuvA-RuvB complex plays an important role in the rescue of blocked DNA replication forks via replication fork reversal (RFR). RuvA specifically binds to HJ cruciform DNA, conferring on it an open structure. The RuvB hexamer acts as an ATP-dependent pump, pulling dsDNA into and through the RuvAB complex. RuvB forms 2 homohexamers on either side of HJ DNA bound by 1 or 2 RuvA tetramers; 4 subunits per hexamer contact DNA at a time. Coordinated motions by a converter formed by DNA-disengaged RuvB subunits stimulates ATP hydrolysis and nucleotide exchange. Immobilization of the converter enables RuvB to convert the ATP-contained energy into a lever motion, pulling 2 nucleotides of DNA out of the RuvA tetramer per ATP hydrolyzed, thus driving DNA branch migration. The RuvB motors rotate together with the DNA substrate, which together with the progressing nucleotide cycle form the mechanistic basis for DNA recombination by continuous HJ branch migration. Branch migration allows RuvC to scan DNA until it finds its consensus sequence, where it cleaves and resolves cruciform DNA. The protein is Holliday junction branch migration complex subunit RuvB of Mycobacterium tuberculosis (strain ATCC 25177 / H37Ra).